The chain runs to 114 residues: Ribosome-binding factor A (114 aa).

This sequence belongs to the RbfA family. In terms of assembly, monomer. Binds 30S ribosomal subunits, but not 50S ribosomal subunits or 70S ribosomes.

The protein resides in the cytoplasm. Its function is as follows. One of several proteins that assist in the late maturation steps of the functional core of the 30S ribosomal subunit. Associates with free 30S ribosomal subunits (but not with 30S subunits that are part of 70S ribosomes or polysomes). Required for efficient processing of 16S rRNA. May interact with the 5'-terminal helix region of 16S rRNA. This chain is Ribosome-binding factor A, found in Listeria monocytogenes serotype 4b (strain F2365).